The following is a 919-amino-acid chain: MLWHYKISPHLSVITDSEPTMTNAVTAETANTNHTNNASSDKTQYQPQLIEAQQQAKWATDKRFEVSNEPSDKPSRYMLSMFPYPSGKLHMGHVRNYTISDVLSRYYRLKGYEVMQPMGWDGFGLPAENAAIANQTPPAKWTFENIDSMRAQLKLLGLSIDWSREFATCSPEYYQWEQWLFLQLYKKGLVYKKLATVNWDPVDNTVLANEQVIDGKGWRSGAMVEKRDIPMYYFNITDYADELLDDLDQLEGHWPSEVITMQRNWIGRSSGMEVHFPYELAGQSNSLDVFTTRPDTLMGVTYVAVAAEHPLAQYASENNKAIADFCALCKKGSVAEADLAKAEKIGMDTGLTVTHPLTGEEVPVWVANYVLMSYGSGAVMAVPAHDERDYEFATKYNLPIKQVIDIPAGYFDDVEEGNENCAYTERNTLVNSGEFDGMDFEQAFEAMLAKLEPQELAKKKIQYRLRDWGVSRQRYWGCPIPMVNCEHCGTVPVEEQDLPVVLPTDVVPDGRGNPLKNIPEFVNTTCPKCGNPAERETDTFDTFVESSWYYARFASPHDTTNMVNKSAANKWLPVDQYIGGVEHAVMHLLYARFFHKLMRDENLVSGDEPFANLMTQGMVLAGTFYRVNADGSTTYYFTKDIDIDFNERGQPIKAILKSDGQPVTIGKIEKMSKSKNNGVDPQITIDKYGADTVRLYTLFTAPADQTLEWSDDALKGPYNFVKKVWRIASEHIQALTDANLSLESLNSDALNTDSLSKEAKALRRKTHETIGKIDSDLGKRLALNTPVSSLMELANELSNFKASSEQELQVQHEALTDLLIMLSVYAPHIGEYLLEQLGLDTVTLNYPMVDESALVQDMITMVIQVNGKMRGKMDVAPNSDPEQLKAQARAIEGVAKFLTGEIKKEIVVPNKLVNIVVAG.

Residues 83–93 (PYPSGKLHMGH) carry the 'HIGH' region motif. The 'KMSKS' region motif lies at 670–674 (KMSKS). K673 provides a ligand contact to ATP.

The protein belongs to the class-I aminoacyl-tRNA synthetase family.

The protein resides in the cytoplasm. The enzyme catalyses tRNA(Leu) + L-leucine + ATP = L-leucyl-tRNA(Leu) + AMP + diphosphate. This Psychrobacter cryohalolentis (strain ATCC BAA-1226 / DSM 17306 / VKM B-2378 / K5) protein is Leucine--tRNA ligase.